Reading from the N-terminus, the 460-residue chain is DNA repair protein RadA (460 aa).

The C4-type zinc-finger motif lies at 11–28 (CNECGADYPRWQGQCSAC). 102–109 (GNPGAGKS) is a binding site for ATP. Positions 258–262 (KNRFG) match the RadA KNRFG motif motif. The segment at 357–460 (DVFVNVVGGV…SDALSVFDDL (104 aa)) is lon-protease-like.

It belongs to the RecA family. RadA subfamily.

Functionally, DNA-dependent ATPase involved in processing of recombination intermediates, plays a role in repairing DNA breaks. Stimulates the branch migration of RecA-mediated strand transfer reactions, allowing the 3' invading strand to extend heteroduplex DNA faster. Binds ssDNA in the presence of ADP but not other nucleotides, has ATPase activity that is stimulated by ssDNA and various branched DNA structures, but inhibited by SSB. Does not have RecA's homology-searching function. Genetic experiments involving combination of radA mutations with mutations in recA, recB, recG, recJ, recQ, ruvA and ruvC show it plays a role in recombination and recombinational repair, probably involving stabilizing or processing branched DNA or blocked replication forks. Is genetically synergistic to RecG and RuvABC. May be involved in recovery of genetic rearrangements during replication fork breakdown. In combination with RadD is important in recovery from double-strand DNA breaks (DSB). The chain is DNA repair protein RadA from Escherichia coli (strain K12).